A 586-amino-acid chain; its full sequence is Aspartate--tRNA ligase (586 aa).

E171 is an L-aspartate binding site. Residues 195–198 are aspartate; sequence QLFK. Residue R217 coordinates L-aspartate. Residues 217 to 219 and Q226 each bind ATP; that span reads RDE. H448 contributes to the L-aspartate binding site. An ATP-binding site is contributed by E482. An L-aspartate-binding site is contributed by R489. Residue 534-537 participates in ATP binding; the sequence is GLDR.

This sequence belongs to the class-II aminoacyl-tRNA synthetase family. Type 1 subfamily. In terms of assembly, homodimer.

The protein resides in the cytoplasm. It carries out the reaction tRNA(Asp) + L-aspartate + ATP = L-aspartyl-tRNA(Asp) + AMP + diphosphate. Its function is as follows. Catalyzes the attachment of L-aspartate to tRNA(Asp) in a two-step reaction: L-aspartate is first activated by ATP to form Asp-AMP and then transferred to the acceptor end of tRNA(Asp). This Buchnera aphidicola subsp. Acyrthosiphon pisum (strain 5A) protein is Aspartate--tRNA ligase.